Consider the following 601-residue polypeptide: Kelch-like ECH-associated protein 1A (601 aa).

The BTB domain maps to 44-117 (MDELRHHEML…VISRLIDFAY (74 aa)). A BACK domain is found at 153–253 (KNLEPSNVIG…LNAVHIYALP (101 aa)). Kelch repeat units lie at residues 292 to 337 (PTPH…PCSG), 338 to 388 (LGAC…PRNR), 389 to 435 (VGVG…ARLG), 436 to 482 (AGVA…VRSG), 484 to 529 (GVVC…CRSA), and 530 to 576 (HGVS…GRSG).

Belongs to the KEAP1 family. As to quaternary structure, homodimer and heterodimer; heterodimerizes with keap1b. Component of the BCR(KEAP1) E3 ubiquitin ligase complex, at least composed of 2 molecules of cul3, 2 molecules of keap1 (keap1a and/or keap1b), and rbx1. Interacts with nfe2l2/nrf2; the interaction is direct. In terms of processing, non-enzymatic covalent modifications of reactive cysteines by electrophile metabolites inactivate the BCR(KEAP1) complex. As to expression, widely expressed.

It localises to the cytoplasm. The protein localises to the nucleus. It functions in the pathway protein modification; protein ubiquitination. With respect to regulation, ubiquitin ligase activity of the BCR(KEAP1) complex is inhibited by oxidative stress and electrophile metabolites such as sulforaphane. Electrophile metabolites react with reactive cysteine residues in keap1 and trigger non-enzymatic covalent modifications of these cysteine residues, leading to inactivate the ubiquitin ligase activity of the BCR(KEAP1) complex. Substrate-specific adapter of a BCR (BTB-CUL3-RBX1) E3 ubiquitin ligase complex that regulates the response to oxidative stress by targeting nfe2l2/nrf2 for ubiquitination. Keap1 acts as a key sensor of oxidative and electrophilic stress: in normal conditions, the BCR(KEAP1) complex mediates ubiquitination and degradation of nfe2l2/nrf2, a transcription factor regulating expression of many cytoprotective genes. In response to oxidative stress, different electrophile metabolites trigger non-enzymatic covalent modifications of highly reactive cysteine residues in KEAP1, leading to inactivate the ubiquitin ligase activity of the BCR(KEAP1) complex, promoting nfe2l2/nrf2 nuclear accumulation and expression of phase II detoxifying enzymes. This Danio rerio (Zebrafish) protein is Kelch-like ECH-associated protein 1A.